The chain runs to 283 residues: Protoheme IX farnesyltransferase (283 aa).

Helical transmembrane passes span 13 to 33, 35 to 55, 90 to 110, 156 to 176, 208 to 228, 230 to 250, and 262 to 282; these read ISSV…PTGL, GGTL…VGTL, ILLV…LTAV, LGAG…PHFL, MIGF…TEAA, WIYG…TIVF, and VLKA…VDWF.

Belongs to the UbiA prenyltransferase family. Protoheme IX farnesyltransferase subfamily.

The protein localises to the cell inner membrane. It carries out the reaction heme b + (2E,6E)-farnesyl diphosphate + H2O = Fe(II)-heme o + diphosphate. It participates in porphyrin-containing compound metabolism; heme O biosynthesis; heme O from protoheme: step 1/1. In terms of biological role, converts heme B (protoheme IX) to heme O by substitution of the vinyl group on carbon 2 of heme B porphyrin ring with a hydroxyethyl farnesyl side group. The protein is Protoheme IX farnesyltransferase of Salinibacter ruber (strain DSM 13855 / M31).